Reading from the N-terminus, the 545-residue chain is O-phosphoserine--tRNA(Cys) ligase (545 aa).

Substrate-binding positions include 189 to 191 (HMT), 234 to 236 (SAS), 276 to 277 (YY), and Asn-328.

Belongs to the class-II aminoacyl-tRNA synthetase family. O-phosphoseryl-tRNA(Cys) synthetase subfamily. In terms of assembly, homotetramer. Interacts with SepCysS.

It carries out the reaction tRNA(Cys) + O-phospho-L-serine + ATP = O-phospho-L-seryl-tRNA(Cys) + AMP + diphosphate. Functionally, catalyzes the attachment of O-phosphoserine (Sep) to tRNA(Cys). The protein is O-phosphoserine--tRNA(Cys) ligase of Methanothrix thermoacetophila (strain DSM 6194 / JCM 14653 / NBRC 101360 / PT) (Methanosaeta thermophila).